Here is a 343-residue protein sequence, read N- to C-terminus: MTTDTSGRTGAPAAAAPAERFRYGFLKGNPQLTKNGELKHLLTIEGLPRAILNQILDTAEQFVSVTDREVKKVPLLRGKSVFNLFFENSTRTRTTFEIAAKRLSADVINLNINASSTSKGESLLDTINNLSAMHADLFVVRHASSGAPYLIAEHCAPHVHVINAGDGRHAHPTQGLLDMYTIRHYKRDFTKLRVAIVGDILHSRVARSDIHALTTLGVPEVRAIGPRTLLPGGLEQMGVRVFHNLDEGLKDVDVIIMLRLQNERMSGALLPSAQEYFKSWGLTPERLALAAPDAIVMHPGPMNRGVEIDSQVADGPQSVILNQVTFGIAVRMAVMGIVAGTND.

Carbamoyl phosphate is bound by residues arginine 91 and threonine 92. Lysine 119 is an L-aspartate binding site. Positions 141, 171, and 174 each coordinate carbamoyl phosphate. Residues arginine 204 and arginine 259 each contribute to the L-aspartate site. Carbamoyl phosphate-binding residues include glycine 300 and proline 301.

It belongs to the aspartate/ornithine carbamoyltransferase superfamily. ATCase family. Heterododecamer (2C3:3R2) of six catalytic PyrB chains organized as two trimers (C3), and six regulatory PyrI chains organized as three dimers (R2).

It catalyses the reaction carbamoyl phosphate + L-aspartate = N-carbamoyl-L-aspartate + phosphate + H(+). Its pathway is pyrimidine metabolism; UMP biosynthesis via de novo pathway; (S)-dihydroorotate from bicarbonate: step 2/3. In terms of biological role, catalyzes the condensation of carbamoyl phosphate and aspartate to form carbamoyl aspartate and inorganic phosphate, the committed step in the de novo pyrimidine nucleotide biosynthesis pathway. The chain is Aspartate carbamoyltransferase catalytic subunit from Burkholderia thailandensis (strain ATCC 700388 / DSM 13276 / CCUG 48851 / CIP 106301 / E264).